A 352-amino-acid chain; its full sequence is UDP-N-acetylglucosamine--N-acetylmuramyl-(pentapeptide) pyrophosphoryl-undecaprenol N-acetylglucosamine transferase (352 aa).

UDP-N-acetyl-alpha-D-glucosamine contacts are provided by serine 195 and glutamine 287.

It belongs to the glycosyltransferase 28 family. MurG subfamily.

The protein localises to the cell membrane. The catalysed reaction is Mur2Ac(oyl-L-Ala-gamma-D-Glu-L-Lys-D-Ala-D-Ala)-di-trans,octa-cis-undecaprenyl diphosphate + UDP-N-acetyl-alpha-D-glucosamine = beta-D-GlcNAc-(1-&gt;4)-Mur2Ac(oyl-L-Ala-gamma-D-Glu-L-Lys-D-Ala-D-Ala)-di-trans,octa-cis-undecaprenyl diphosphate + UDP + H(+). The protein operates within cell wall biogenesis; peptidoglycan biosynthesis. Functionally, cell wall formation. Catalyzes the transfer of a GlcNAc subunit on undecaprenyl-pyrophosphoryl-MurNAc-pentapeptide (lipid intermediate I) to form undecaprenyl-pyrophosphoryl-MurNAc-(pentapeptide)GlcNAc (lipid intermediate II). The polypeptide is UDP-N-acetylglucosamine--N-acetylmuramyl-(pentapeptide) pyrophosphoryl-undecaprenol N-acetylglucosamine transferase (Streptococcus pneumoniae (strain Taiwan19F-14)).